The sequence spans 767 residues: 5-methyltetrahydropteroyltriglutamate--homocysteine methyltransferase (767 aa).

5-methyltetrahydropteroyltri-L-glutamate contacts are provided by residues 17 to 20 and Lys117; that span reads RELK. L-homocysteine contacts are provided by residues 441–443 and Glu494; that span reads IGS. L-methionine-binding positions include 441–443 and Glu494; that span reads IGS. Residues 525–526 and Trp571 each bind 5-methyltetrahydropteroyltri-L-glutamate; that span reads RC. Asp609 serves as a coordination point for L-homocysteine. Asp609 contributes to the L-methionine binding site. Residue Glu615 participates in 5-methyltetrahydropteroyltri-L-glutamate binding. Zn(2+) contacts are provided by His652, Cys654, and Glu676. His705 functions as the Proton donor in the catalytic mechanism. A Zn(2+)-binding site is contributed by Cys737.

It belongs to the vitamin-B12 independent methionine synthase family. Requires Zn(2+) as cofactor.

It carries out the reaction 5-methyltetrahydropteroyltri-L-glutamate + L-homocysteine = tetrahydropteroyltri-L-glutamate + L-methionine. The protein operates within amino-acid biosynthesis; L-methionine biosynthesis via de novo pathway; L-methionine from L-homocysteine (MetE route): step 1/1. Catalyzes the transfer of a methyl group from 5-methyltetrahydrofolate to homocysteine resulting in methionine formation. In Bifidobacterium longum subsp. infantis (strain ATCC 15697 / DSM 20088 / JCM 1222 / NCTC 11817 / S12), this protein is 5-methyltetrahydropteroyltriglutamate--homocysteine methyltransferase.